The primary structure comprises 1148 residues: Transcription-repair-coupling factor (1148 aa).

One can recognise a Helicase ATP-binding domain in the interval 615 to 776 (DMCQPLAMDR…MSGMRDLSII (162 aa)). An ATP-binding site is contributed by 628 to 635 (GDVGFGKT). The DEEH box signature appears at 729–732 (DEEH). One can recognise a Helicase C-terminal domain in the interval 798-951 (VREAILREIL…GFALATHDLE (154 aa)).

The protein in the N-terminal section; belongs to the UvrB family. This sequence in the C-terminal section; belongs to the helicase family. RecG subfamily. Monomer. Interacts with UvrA and RNAP.

It is found in the cytoplasm. Couples transcription and DNA repair by recognizing RNA polymerase (RNAP) stalled at DNA lesions. Mediates ATP-dependent release of RNAP and its truncated transcript from the DNA, and recruitment of nucleotide excision repair machinery to the damaged site. Can also dissociate RNAP that is blocked by low concentration of nucleoside triphosphates or by physical obstruction, such as bound proteins. In addition, can rescue arrested complexes by promoting forward translocation. Has ATPase activity, which is required for removal of stalled RNAP, but seems to lack helicase activity. May act through a translocase activity that rewinds upstream DNA, leading either to translocation or to release of RNAP when the enzyme active site cannot continue elongation. This chain is Transcription-repair-coupling factor, found in Escherichia coli (strain K12).